Reading from the N-terminus, the 331-residue chain is ADP-L-glycero-D-manno-heptose-6-epimerase (331 aa).

NADP(+) contacts are provided by residues 11-12 (FI), 32-33 (DN), K39, K54, 75-79 (EGACS), and N92. Y139 functions as the Proton acceptor in the catalytic mechanism. K143 is a binding site for NADP(+). N168 is a substrate binding site. The NADP(+) site is built by V169 and K177. K177 acts as the Proton acceptor in catalysis. Residues R179, H186, 200–203 (FGEY), R213, and Y292 each bind substrate.

This sequence belongs to the NAD(P)-dependent epimerase/dehydratase family. HldD subfamily. Homopentamer. NADP(+) serves as cofactor.

It carries out the reaction ADP-D-glycero-beta-D-manno-heptose = ADP-L-glycero-beta-D-manno-heptose. Its pathway is nucleotide-sugar biosynthesis; ADP-L-glycero-beta-D-manno-heptose biosynthesis; ADP-L-glycero-beta-D-manno-heptose from D-glycero-beta-D-manno-heptose 7-phosphate: step 4/4. Catalyzes the interconversion between ADP-D-glycero-beta-D-manno-heptose and ADP-L-glycero-beta-D-manno-heptose via an epimerization at carbon 6 of the heptose. In Cupriavidus taiwanensis (strain DSM 17343 / BCRC 17206 / CCUG 44338 / CIP 107171 / LMG 19424 / R1) (Ralstonia taiwanensis (strain LMG 19424)), this protein is ADP-L-glycero-D-manno-heptose-6-epimerase.